The following is a 704-amino-acid chain: Elongation factor G (704 aa).

Residues 8–291 (DRVRNIGIMA…AVIDYLASPV (284 aa)) form the tr-type G domain. Residues 17–24 (AHIDAGKT), 90–94 (DTPGH), and 144–147 (NKMD) each bind GTP.

It belongs to the TRAFAC class translation factor GTPase superfamily. Classic translation factor GTPase family. EF-G/EF-2 subfamily.

Its subcellular location is the cytoplasm. Catalyzes the GTP-dependent ribosomal translocation step during translation elongation. During this step, the ribosome changes from the pre-translocational (PRE) to the post-translocational (POST) state as the newly formed A-site-bound peptidyl-tRNA and P-site-bound deacylated tRNA move to the P and E sites, respectively. Catalyzes the coordinated movement of the two tRNA molecules, the mRNA and conformational changes in the ribosome. The polypeptide is Elongation factor G (Chlorobaculum tepidum (strain ATCC 49652 / DSM 12025 / NBRC 103806 / TLS) (Chlorobium tepidum)).